The chain runs to 298 residues: MATH domain and coiled-coil domain-containing protein At3g58280 (298 aa).

One can recognise an MATH domain in the interval 9–128; that stretch reads KKTFGWVIKD…NGEITIIAEV (120 aa). A coiled-coil region spans residues 240–288; sequence NLDWLRQKFDQALEKQIAYDTRIGELEKQVKKRKLAVTELEADLEKEKA.

The chain is MATH domain and coiled-coil domain-containing protein At3g58280 from Arabidopsis thaliana (Mouse-ear cress).